The following is a 248-amino-acid chain: UDP-2,3-diacylglucosamine hydrolase (248 aa).

Residues aspartate 7, histidine 9, aspartate 40, asparagine 78, and histidine 113 each coordinate Mn(2+). 78-79 serves as a coordination point for substrate; the sequence is NR. 5 residues coordinate substrate: aspartate 121, serine 159, threonine 163, lysine 166, and histidine 194. Residues histidine 194 and histidine 196 each contribute to the Mn(2+) site.

The protein belongs to the LpxH family. Mn(2+) serves as cofactor.

The protein resides in the cell inner membrane. The enzyme catalyses UDP-2-N,3-O-bis[(3R)-3-hydroxytetradecanoyl]-alpha-D-glucosamine + H2O = 2-N,3-O-bis[(3R)-3-hydroxytetradecanoyl]-alpha-D-glucosaminyl 1-phosphate + UMP + 2 H(+). It participates in glycolipid biosynthesis; lipid IV(A) biosynthesis; lipid IV(A) from (3R)-3-hydroxytetradecanoyl-[acyl-carrier-protein] and UDP-N-acetyl-alpha-D-glucosamine: step 4/6. Functionally, hydrolyzes the pyrophosphate bond of UDP-2,3-diacylglucosamine to yield 2,3-diacylglucosamine 1-phosphate (lipid X) and UMP by catalyzing the attack of water at the alpha-P atom. Involved in the biosynthesis of lipid A, a phosphorylated glycolipid that anchors the lipopolysaccharide to the outer membrane of the cell. The chain is UDP-2,3-diacylglucosamine hydrolase from Pseudomonas syringae pv. syringae (strain B728a).